We begin with the raw amino-acid sequence, 275 residues long: Putative acyl-[acyl-carrier-protein] desaturase DesA2 (275 aa).

The Fe cation site is built by glutamate 107, histidine 110, glutamate 159, glutamate 189, and histidine 192.

This sequence belongs to the fatty acid desaturase type 2 family. Homodimer. Fe(2+) is required as a cofactor.

Its pathway is lipid metabolism; fatty acid metabolism. Functionally, may be a desaturase involved in mycobacterial fatty acid biosynthesis. This chain is Putative acyl-[acyl-carrier-protein] desaturase DesA2 (desA2), found in Mycobacterium tuberculosis (strain CDC 1551 / Oshkosh).